The primary structure comprises 242 residues: Small ribosomal subunit protein uS2 (242 aa).

It belongs to the universal ribosomal protein uS2 family.

The sequence is that of Small ribosomal subunit protein uS2 from Shewanella sediminis (strain HAW-EB3).